The chain runs to 225 residues: NAD(P)H-hydrate epimerase (225 aa).

The YjeF N-terminal domain occupies 9-209 (MQTIDNYTVE…DIGLLTPQDF (201 aa)). 57-61 (NNGAD) serves as a coordination point for (6S)-NADPHX. K(+) is bound by residues Asn-58 and Asp-119. (6S)-NADPHX is bound by residues 123–129 (GTGLNNL) and Asp-152. Thr-155 contributes to the K(+) binding site.

Belongs to the NnrE/AIBP family. The cofactor is K(+).

The catalysed reaction is (6R)-NADHX = (6S)-NADHX. The enzyme catalyses (6R)-NADPHX = (6S)-NADPHX. Its function is as follows. Catalyzes the epimerization of the S- and R-forms of NAD(P)HX, a damaged form of NAD(P)H that is a result of enzymatic or heat-dependent hydration. This is a prerequisite for the S-specific NAD(P)H-hydrate dehydratase to allow the repair of both epimers of NAD(P)HX. The chain is NAD(P)H-hydrate epimerase from Leuconostoc kimchii (strain IMSNU 11154 / KCTC 2386 / IH25).